Here is a 340-residue protein sequence, read N- to C-terminus: Guanine nucleotide-binding protein G(I)/G(S)/G(T) subunit beta-1 (340 aa).

7 WD repeats span residues 53–83, 95–125, 141–170, 182–212, 224–254, 268–298, and 310–340; these read GHLA…IVWD, LRSS…SIYS, GHTG…ALWD, GHTG…KLWD, GHES…RLFD, NIIC…NVWD, and GHDN…KIWN.

It belongs to the WD repeat G protein beta family. G proteins are composed of 3 units, alpha, beta and gamma.

In terms of biological role, guanine nucleotide-binding proteins (G proteins) are involved as a modulator or transducer in various transmembrane signaling systems. The beta and gamma chains are required for the GTPase activity, for replacement of GDP by GTP, and for G protein-effector interaction. The chain is Guanine nucleotide-binding protein G(I)/G(S)/G(T) subunit beta-1 (GBETA1) from Homarus americanus (American lobster).